We begin with the raw amino-acid sequence, 95 residues long: Aspartyl/glutamyl-tRNA(Asn/Gln) amidotransferase subunit C (95 aa).

It belongs to the GatC family. Heterotrimer of A, B and C subunits.

It carries out the reaction L-glutamyl-tRNA(Gln) + L-glutamine + ATP + H2O = L-glutaminyl-tRNA(Gln) + L-glutamate + ADP + phosphate + H(+). The enzyme catalyses L-aspartyl-tRNA(Asn) + L-glutamine + ATP + H2O = L-asparaginyl-tRNA(Asn) + L-glutamate + ADP + phosphate + 2 H(+). Allows the formation of correctly charged Asn-tRNA(Asn) or Gln-tRNA(Gln) through the transamidation of misacylated Asp-tRNA(Asn) or Glu-tRNA(Gln) in organisms which lack either or both of asparaginyl-tRNA or glutaminyl-tRNA synthetases. The reaction takes place in the presence of glutamine and ATP through an activated phospho-Asp-tRNA(Asn) or phospho-Glu-tRNA(Gln). This Nitrosomonas europaea (strain ATCC 19718 / CIP 103999 / KCTC 2705 / NBRC 14298) protein is Aspartyl/glutamyl-tRNA(Asn/Gln) amidotransferase subunit C.